A 131-amino-acid polypeptide reads, in one-letter code: C-C motif chemokine 21 (131 aa).

Residues 1–23 (MAQSLALSLLILVLAFGIPGTQG) form the signal peptide. Cystine bridges form between cysteine 31–cysteine 57, cysteine 32–cysteine 75, and cysteine 103–cysteine 119. Residues 89-131 (HLDKTPTPRKPVQGCRKDRGVPKNGKKGKGCKRTEQSQTPKGP) are disordered.

Belongs to the intercrine beta (chemokine CC) family. As to quaternary structure, monomer. Binds to CCR7. Interacts with PDPN; relocalizes PDPN to the basolateral membrane. Interacts with TNFAIP6 (via Link domain). Interacts with GPR174.

The protein localises to the secreted. Its function is as follows. Inhibits hemopoiesis and stimulates chemotaxis. Chemotactic in vitro for thymocytes and activated T-cells, but not for B-cells, macrophages, or neutrophils. Shows preferential activity towards naive T-cells. May play a role in mediating homing of lymphocytes to secondary lymphoid organs. Binds to atypical chemokine receptor ACKR4 and mediates the recruitment of beta-arrestin (ARRB1/2) to ACKR4. This Macaca mulatta (Rhesus macaque) protein is C-C motif chemokine 21 (CCL21).